Consider the following 347-residue polypeptide: Selenide, water dikinase (347 aa).

Cys-17 is an active-site residue. Residues Lys-20 and 48–50 (TRD) each bind ATP. Asp-51 contacts Mg(2+). Residues Asp-68, Asp-91, and 139 to 141 (GHS) each bind ATP. Asp-91 lines the Mg(2+) pocket. Position 227 (Asp-227) interacts with Mg(2+).

This sequence belongs to the selenophosphate synthase 1 family. Class I subfamily. Homodimer. Requires Mg(2+) as cofactor.

The enzyme catalyses hydrogenselenide + ATP + H2O = selenophosphate + AMP + phosphate + 2 H(+). Functionally, synthesizes selenophosphate from selenide and ATP. The chain is Selenide, water dikinase from Escherichia coli O157:H7.